Reading from the N-terminus, the 398-residue chain is Streptopain (398 aa).

An N-terminal signal peptide occupies residues 1–27; it reads MNKKKLGVRLLSLLALGGFVLANPVFA. Residues 28-145 constitute a propeptide that is removed on maturation; it reads DQNFARNEKE…TTYAGTAEIK (118 aa). Cys192 (nucleophile) is an active-site residue. The residue at position 192 (Cys192) is a Cysteine methyl disulfide; in zymogen form. 2 residues coordinate a protein: Ser282 and Gly339. The active-site Proton acceptor is the His340. The tract at residues 368 to 390 is C-terminal active site loop; that stretch reads RLDALNPSALGTGGGAGGFNGYQ.

It belongs to the peptidase C10 family. Monomer. Post-translationally, the mature protease is derived from the precursor sequence by cleavage, either in cis via an autocatalytic mechanism, or in trans by mature SpeB or host proteases (trypsin, plasmin or subtilisin). Maturation can involve a number of protein cleavage intermediates. Mature SpeB probably plays the most important role in protein maturation in physiological conditions. In terms of processing, methylthiolation at Cys-192 of the inactive zymogen form is probably involved in the mechanism of secretion of the proteinase into the culture fluid.

It is found in the secreted. The protein resides in the host extracellular space. It localises to the host cytoplasm. The catalysed reaction is Preferential cleavage with hydrophobic residues at P2, P1 and P1'.. With respect to regulation, synthesized as an inactive zymogen to protect the intracellular components of the bacteria from proteolytic activity during protein production. Once secreted into the extracellular milieu, cleaved into the active protease: maturation can be mediated in cis by autocatalytic cleavage, or in trans by mature SpeB or host proteases. Protease activity is strongly inhibited by zinc and copper, which prevent its maturation into an active protease: inhibition by metal ions may be required to prevent proteolysis of streptococcal proteins. Functionally, cysteine protease that acts as a key streptococcal virulence factor by cleaving host proteins involved in immune response. Triggers inflammation by mediating cleavage of host proteins, which can both promote host pathogenesis by triggering sterile inflammation and/or restrict streptococcal infection, depending on host immune statue and infection site. Cleaves host gasdermin-A (GSDMA) in epithelial cells, promoting GSDMA activation and formation of gasdermin pores, triggering pyroptosis. Pyroptosis triggers the elimination of the infected skin cell, depriving the pathogen of its protective niche, while inducing an inflammatory response. This ultimately prevents bacterial penetration of the epithelial barrier and a subsequent systemic dissemination of the pathogen. Also mediates cleavage of the cytokine precursor interleukin-1 beta (IL1B) to its mature form, resulting in inflammation and septic shock. SpeB-mediated maturation of IL1B plays a dual role depending on infection site: while IL1B inflammatory response prevents bacterial growth during invasive skin infections, it promotes streptococcal infection of the nasopharynx by disrupting colonization resistance mediated by the microbiota. Inhibits host autophagy be catalyzing cleavage and inactivation of key autophagy factors, such as CALCOCO2, NBR1 and SQSTM1. Cleaves and inhibits a number of complement factors, such as C2, C3-beta chain of C3, C4, C5 or SERPING1, thereby promoting evasion of host immunity. May also impair adaptive immunity by catalyzing cleavage and degradation of host immunoglobulins to promote immune system evasion; the relevance of this activity is however unsure in vivo. Catalyzes maturation and release of the peptide hormone bradykinin from the precursor Kininogen-1 (KNG1) to produce hypotension during septic shock. Also involved in bacterial translocation across the host epithelial barrier by mediating cleavage and degradation of host epithelial junction proteins, such as CDH1 and OCLN. Additionally, has been involved in degradation of fibronectin and vitronectin, two host extracellular matrix proteins involved in tissue integrity. Also able to catalyze cleavage and degradation of streptococcal proteins, such as C5a peptidase, EndoS or SmeZ. Degradation of streptococcal proteins is however strictly regulated to preserve integrity of other virulence factors. The protein is Streptopain of Streptococcus pyogenes serotype M1.